The following is a 405-amino-acid chain: Phosphopentomutase (405 aa).

Positions 10, 305, 310, 346, 347, and 358 each coordinate Mn(2+).

The protein belongs to the phosphopentomutase family. The cofactor is Mn(2+).

It localises to the cytoplasm. The catalysed reaction is 2-deoxy-alpha-D-ribose 1-phosphate = 2-deoxy-D-ribose 5-phosphate. It catalyses the reaction alpha-D-ribose 1-phosphate = D-ribose 5-phosphate. Its pathway is carbohydrate degradation; 2-deoxy-D-ribose 1-phosphate degradation; D-glyceraldehyde 3-phosphate and acetaldehyde from 2-deoxy-alpha-D-ribose 1-phosphate: step 1/2. In terms of biological role, isomerase that catalyzes the conversion of deoxy-ribose 1-phosphate (dRib-1-P) and ribose 1-phosphate (Rib-1-P) to deoxy-ribose 5-phosphate (dRib-5-P) and ribose 5-phosphate (Rib-5-P), respectively. The chain is Phosphopentomutase from Methylobacterium sp. (strain 4-46).